The chain runs to 340 residues: Phosphate acyltransferase (340 aa).

It belongs to the PlsX family. In terms of assembly, homodimer. Probably interacts with PlsY.

The protein resides in the cytoplasm. The enzyme catalyses a fatty acyl-[ACP] + phosphate = an acyl phosphate + holo-[ACP]. It functions in the pathway lipid metabolism; phospholipid metabolism. Functionally, catalyzes the reversible formation of acyl-phosphate (acyl-PO(4)) from acyl-[acyl-carrier-protein] (acyl-ACP). This enzyme utilizes acyl-ACP as fatty acyl donor, but not acyl-CoA. The protein is Phosphate acyltransferase of Pseudomonas syringae pv. tomato (strain ATCC BAA-871 / DC3000).